An 84-amino-acid chain; its full sequence is Defensin-like protein 140 (84 aa).

The signal sequence occupies residues 1–28 (MSKSLQLIVTVLCIFTILVLGEICLAKG). Cystine bridges form between Cys37–Cys81, Cys46–Cys65, Cys51–Cys75, and Cys55–Cys77.

This sequence belongs to the DEFL family.

The protein resides in the secreted. In Arabidopsis thaliana (Mouse-ear cress), this protein is Defensin-like protein 140 (LCR15).